The chain runs to 269 residues: NAD kinase (269 aa).

Residue D45 is the Proton acceptor of the active site. NAD(+) contacts are provided by residues D45 to G46, N122 to E123, R149, D151, and A186.

This sequence belongs to the NAD kinase family. Requires a divalent metal cation as cofactor.

It localises to the cytoplasm. It carries out the reaction NAD(+) + ATP = ADP + NADP(+) + H(+). Functionally, involved in the regulation of the intracellular balance of NAD and NADP, and is a key enzyme in the biosynthesis of NADP. Catalyzes specifically the phosphorylation on 2'-hydroxyl of the adenosine moiety of NAD to yield NADP. This Staphylococcus carnosus (strain TM300) protein is NAD kinase.